The following is a 100-amino-acid chain: Large ribosomal subunit protein eL31 (100 aa).

It belongs to the eukaryotic ribosomal protein eL31 family.

The chain is Large ribosomal subunit protein eL31 from Hyperthermus butylicus (strain DSM 5456 / JCM 9403 / PLM1-5).